The chain runs to 380 residues: O-phospho-L-seryl-tRNA:Cys-tRNA synthase (380 aa).

Residues 86–87, N192, and 215–217 each bind pyridoxal 5'-phosphate; these read AR and SGH. K218 carries the N6-(pyridoxal phosphate)lysine modification.

Belongs to the SepCysS family. In terms of assembly, homodimer. Interacts with SepRS. The cofactor is pyridoxal 5'-phosphate.

The enzyme catalyses O-phospho-L-seryl-tRNA(Cys) + hydrogen sulfide + H(+) = L-cysteinyl-tRNA(Cys) + phosphate. Converts O-phospho-L-seryl-tRNA(Cys) (Sep-tRNA(Cys)) to L-cysteinyl-tRNA(Cys) (Cys-tRNA(Cys)). This is O-phospho-L-seryl-tRNA:Cys-tRNA synthase from Methanococcus maripaludis (strain C7 / ATCC BAA-1331).